Consider the following 299-residue polypeptide: Fibrinogen silencer-binding protein (299 aa).

K94 is covalently cross-linked (Glycyl lysine isopeptide (Lys-Gly) (interchain with G-Cter in SUMO2)). The segment at 189-211 (EGSESPSLSSVDMRMTSSPSSVP) is disordered. The segment covering 192-209 (ESPSLSSVDMRMTSSPSS) has biased composition (polar residues).

As to quaternary structure, interacts with APBA1 (via PDZ 1 and 2 domains).

It is found in the nucleus. Transcriptional repressor that down-regulates the expression of the fibrinogen gamma chain. Represses transcription of GSK3B gene promoter via its interaction with APBA1. This Mus musculus (Mouse) protein is Fibrinogen silencer-binding protein (Fsbp).